Reading from the N-terminus, the 500-residue chain is MKFHLEVSLKLSGDAANAEGDLAEFFEKQAVDLLKKGAPEGMGAKVAGWRITGDQLEIKIESDRYVRAHDALLRLRKPLANLLGRKHRLGIRGINVSRFEIQIESNRQITHRIPYVRESRYEDGLLTLILGVEDPKRGWTWMLENRIPDRIVNLLEEKLQSYGGKAEHWELLWESPPREFKFSGDPTQEMVKRGWIKHGSARGQWIHGPQSTHLFRTFERIVLEEILVPLGYREMIFPKLDTWDVWKRSGHAQGVYPEIYYVCPPKSRDPAFWEEVIDYYKVTHEIPLDLIKEKIDYPIGGMCYAQCPTFWVFLQGATLPNDELPIKVFDRSGTSHRYESGGIHGIERVDEFHRIEIVWLGTKQQVMEEAERLKERYKHIFEEILELRWRMAWVTPWFMAQEGRTGLAEMEGAGTIDYEALLPYSGNWIEFQNLSVNGEKYPKGFSVKAQSGESLWSGCSGVGLERWTSVFLGQKGLDPDNWPDEFRKRFGEMPRGIRFL.

Ala305 is an L-serine binding site. Cys307 lines the Zn(2+) pocket. Arg337 serves as a coordination point for L-serine. Residues 337–339 (RYE) and 348–349 (RV) each bind ATP. L-serine-binding positions include 354-356 (RIE) and Gln401. Glu356 provides a ligand contact to Zn(2+). Glu430 lines the ATP pocket. Position 433 (Asn433) interacts with L-serine. Cys459 serves as a coordination point for Zn(2+). Arg466 provides a ligand contact to ATP.

It belongs to the class-II aminoacyl-tRNA synthetase family. Type-2 seryl-tRNA synthetase subfamily. In terms of assembly, homodimer. Zn(2+) serves as cofactor.

It localises to the cytoplasm. It carries out the reaction tRNA(Ser) + L-serine + ATP = L-seryl-tRNA(Ser) + AMP + diphosphate + H(+). It catalyses the reaction tRNA(Sec) + L-serine + ATP = L-seryl-tRNA(Sec) + AMP + diphosphate + H(+). The protein operates within aminoacyl-tRNA biosynthesis; selenocysteinyl-tRNA(Sec) biosynthesis; L-seryl-tRNA(Sec) from L-serine and tRNA(Sec): step 1/1. Catalyzes the attachment of serine to tRNA(Ser). Is also able to aminoacylate tRNA(Sec) with serine, to form the misacylated tRNA L-seryl-tRNA(Sec), which will be further converted into selenocysteinyl-tRNA(Sec). The polypeptide is Type-2 serine--tRNA ligase (Methanothrix thermoacetophila (strain DSM 6194 / JCM 14653 / NBRC 101360 / PT) (Methanosaeta thermophila)).